A 228-amino-acid chain; its full sequence is MNKFISIIALCVFSSYANAAFTLNSTRYIYNEGQQSVSVNIHNESEHKYGGQVWIDNIDKNGEVVFFSPSPMVFKLNPKQKQIVRIVNINDNLPKDRESIFWLNVQEIPPAPKGDGGSLSLAINNRVKLIYRPIALKNGRDEAENNIKLINSGTDSCLENTTPYYFAISDVKINGKSIDLNSDAKNKMGVFSPFSKVCLGNVNTSGNITVTAFNDYGVATSYTVQRSK.

The signal sequence occupies residues 1–19 (MNKFISIIALCVFSSYANA). An intrachain disulfide couples Cys-157 to Cys-198.

Belongs to the periplasmic pilus chaperone family.

It localises to the periplasm. Its function is as follows. Mediates assembly of pili by forming soluble multimeric complexes with pili subunits as an intermediate step in the assembly process. This protein is involved in K99 pili assembly. This is Chaperone protein FanE (fanE) from Escherichia coli.